The primary structure comprises 510 residues: Anaerobic nitric oxide reductase transcription regulator NorR (510 aa).

Residues I188–V417 enclose the Sigma-54 factor interaction domain. Residues G216–E223 and A279–E288 each bind ATP. Positions W486–K505 form a DNA-binding region, H-T-H motif.

It functions in the pathway nitrogen metabolism; nitric oxide reduction. Required for the expression of anaerobic nitric oxide (NO) reductase, acts as a transcriptional activator for at least the norVW operon. Activation also requires sigma-54. This chain is Anaerobic nitric oxide reductase transcription regulator NorR, found in Vibrio vulnificus (strain YJ016).